Consider the following 431-residue polypeptide: Urokinase-type plasminogen activator (431 aa).

Positions 1–20 (MRALLARLLLCVLVVSDSKG) are cleaved as a signal peptide. The 37-residue stretch at 27–63 (VPSNCDCLNGGTCVSNKYFSNIHWCNCPKKFGGQHCE) folds into the EGF-like domain. 6 disulfide bridges follow: cysteine 31/cysteine 39, cysteine 33/cysteine 51, cysteine 53/cysteine 62, cysteine 70/cysteine 151, cysteine 91/cysteine 133, and cysteine 122/cysteine 146. The segment at 34–57 (LNGGTCVSNKYFSNIHWCNCPKKF) is binds urokinase plasminogen activator surface receptor. The O-linked (Fuc) threonine glycan is linked to threonine 38. A Kringle domain is found at 70–151 (CYEGNGHFYR…LVQECMVHDC (82 aa)). The connecting peptide stretch occupies residues 152 to 177 (ADGKKPSSPPEELKFQCGQKTLRPRF). Position 158 is a phosphoserine (serine 158). 6 disulfides stabilise this stretch: cysteine 168–cysteine 299, cysteine 209–cysteine 225, cysteine 217–cysteine 288, cysteine 313–cysteine 382, cysteine 345–cysteine 361, and cysteine 372–cysteine 400. Residues 179-424 (IIGGEFTTIE…FLPWIRSHTK (246 aa)) form the Peptidase S1 domain. Active-site charge relay system residues include histidine 224 and aspartate 275. Asparagine 322 is a glycosylation site (N-linked (GlcNAc...) asparagine). Residue serine 323 is modified to Phosphoserine. Residue serine 376 is the Charge relay system of the active site.

Belongs to the peptidase S1 family. As to quaternary structure, found in high and low molecular mass forms. Each consists of two chains, A and B. The high molecular mass form contains a long chain A which is cleaved to yield a short chain A. Forms heterodimer with SERPINA5. Binds LRP1B; binding is followed by internalization and degradation. Interacts with MRC2. Interacts with PLAUR. In complex with SERPINE1, interacts with PLAUR/uPAR. Interacts with SORL1 and LRP1, either alone or in complex with SERPINE1; these interactions are abolished in the presence of LRPAP1/RAP. The ternary complex composed of PLAUR-PLAU-PAI1 also interacts with SORLA. Post-translationally, phosphorylation of Ser-158 and Ser-323 abolishes proadhesive ability but does not interfere with receptor binding. Produced as an inactive single-chain protein (pro-uPA or sc-uPA), is processed into the active disulfide-linked two-chain form of PLAU/uPA by a proteolytic event mediated, at least, by TMPRSS4. As to expression, expressed in the prostate gland and prostate cancers.

It is found in the secreted. The enzyme catalyses Specific cleavage of Arg-|-Val bond in plasminogen to form plasmin.. Its activity is regulated as follows. Inhibited by SERPINA5. Inhibited by SERPINE1. In terms of biological role, specifically cleaves the zymogen plasminogen to form the active enzyme plasmin. The sequence is that of Urokinase-type plasminogen activator from Homo sapiens (Human).